Reading from the N-terminus, the 228-residue chain is Putative elongation factor Tu-like protein (228 aa).

The region spanning Lys6–Phe212 is the tr-type G domain. The G1 stretch occupies residues Gly15–Thr22. Residues Gly59–Ser63 form a G2 region. The tract at residues Asp80 to Gly83 is G3. The tract at residues Asn135–Asp138 is G4. Residues Ser173–Val175 form a G5 region.

Belongs to the TRAFAC class translation factor GTPase superfamily. Classic translation factor GTPase family. EF-Tu/EF-1A subfamily.

The protein is Putative elongation factor Tu-like protein of Ehrlichia ruminantium (strain Welgevonden).